The sequence spans 550 residues: Pectinesterase 2.1 (550 aa).

Asparagine 179 is a glycosylation site (N-linked (GlcNAc...) asparagine). Substrate is bound by residues threonine 312 and glutamine 342. Cysteine 331 and cysteine 358 form a disulfide bridge. The Proton donor role is filled by aspartate 365. Aspartate 386 functions as the Nucleophile in the catalytic mechanism. A disulfide bond links cysteine 399 and cysteine 433. 2 residues coordinate substrate: arginine 454 and tryptophan 456.

This sequence in the N-terminal section; belongs to the PMEI family. The protein in the C-terminal section; belongs to the pectinesterase family.

Its subcellular location is the secreted. It is found in the cell wall. It catalyses the reaction [(1-&gt;4)-alpha-D-galacturonosyl methyl ester](n) + n H2O = [(1-&gt;4)-alpha-D-galacturonosyl](n) + n methanol + n H(+). It participates in glycan metabolism; pectin degradation; 2-dehydro-3-deoxy-D-gluconate from pectin: step 1/5. Functionally, pectinesterase may play a role in cell wall metabolism during fruit growth and development prior to ripening and may be required for preparing cell walls for softening by polygalacturonase during fruit ripening. This Solanum lycopersicum (Tomato) protein is Pectinesterase 2.1 (PME2.1).